An 82-amino-acid chain; its full sequence is MIIKEFLTTEKAIKLIESQNTLTVIVNKEATKADIKREIEKMFNVKVDKVNTLITIRGEKKAYVKLKKEFNASDIAHRLGIL.

The protein belongs to the universal ribosomal protein uL23 family. In terms of assembly, part of the 50S ribosomal subunit. Contacts protein L29.

Functionally, binds to 23S rRNA. One of the proteins that surrounds the polypeptide exit tunnel on the outside of the ribosome. The protein is Large ribosomal subunit protein uL23 of Sulfurisphaera tokodaii (strain DSM 16993 / JCM 10545 / NBRC 100140 / 7) (Sulfolobus tokodaii).